We begin with the raw amino-acid sequence, 257 residues long: Hydroxyacylglutathione hydrolase (257 aa).

Positions 54, 56, 58, 59, 113, 137, and 175 each coordinate Zn(2+).

It belongs to the metallo-beta-lactamase superfamily. Glyoxalase II family. Monomer. It depends on Zn(2+) as a cofactor.

It carries out the reaction an S-(2-hydroxyacyl)glutathione + H2O = a 2-hydroxy carboxylate + glutathione + H(+). Its pathway is secondary metabolite metabolism; methylglyoxal degradation; (R)-lactate from methylglyoxal: step 2/2. Functionally, thiolesterase that catalyzes the hydrolysis of S-D-lactoyl-glutathione to form glutathione and D-lactic acid. The polypeptide is Hydroxyacylglutathione hydrolase (Gloeothece citriformis (strain PCC 7424) (Cyanothece sp. (strain PCC 7424))).